The chain runs to 358 residues: S-adenosylmethionine decarboxylase proenzyme (358 aa).

Catalysis depends on residues Glu11 and Glu14. Catalysis depends on Ser71, which acts as the Schiff-base intermediate with substrate; via pyruvic acid. Residue Ser71 is modified to Pyruvic acid (Ser); by autocatalysis. Cys85 acts as the Proton donor; for catalytic activity in catalysis. Active-site proton acceptor; for processing activity residues include Ser234 and His247.

It belongs to the eukaryotic AdoMetDC family. Requires pyruvate as cofactor. Is synthesized initially as an inactive proenzyme. Formation of the active enzyme involves a self-maturation process in which the active site pyruvoyl group is generated from an internal serine residue via an autocatalytic post-translational modification. Two non-identical subunits are generated from the proenzyme in this reaction, and the pyruvate is formed at the N-terminus of the alpha chain, which is derived from the carboxyl end of the proenzyme. The post-translation cleavage follows an unusual pathway, termed non-hydrolytic serinolysis, in which the side chain hydroxyl group of the serine supplies its oxygen atom to form the C-terminus of the beta chain, while the remainder of the serine residue undergoes an oxidative deamination to produce ammonia and the pyruvoyl group blocking the N-terminus of the alpha chain.

The enzyme catalyses S-adenosyl-L-methionine + H(+) = S-adenosyl 3-(methylsulfanyl)propylamine + CO2. Its pathway is amine and polyamine biosynthesis; S-adenosylmethioninamine biosynthesis; S-adenosylmethioninamine from S-adenosyl-L-methionine: step 1/1. In Solanum chilense (Tomato), this protein is S-adenosylmethionine decarboxylase proenzyme (SAMDC).